The primary structure comprises 60 residues: Protein BNLF2a (60 aa).

Residues 14-26 (SSACGLPGSSTET) are compositionally biased toward polar residues. The segment at 14–34 (SSACGLPGSSTETRPSHPCPE) is disordered. Residues 41–59 (LRLLLVVLCVLFGLLCLLL) traverse the membrane as a helical segment.

This sequence belongs to the lymphocryptovirus BNLF2a family. As to quaternary structure, interacts with host TAP1 and TAP2.

It localises to the host endoplasmic reticulum membrane. Its function is as follows. Participates in viral evasion from HLA class I-restricted T-cell immunity. Associates with host TAP1 and TAP2 and prevents TAP-mediated peptide transport and subsequent loading. The polypeptide is Protein BNLF2a (Homo sapiens (Human)).